We begin with the raw amino-acid sequence, 175 residues long: UPF0398 protein SPD_0338 (175 aa).

It belongs to the UPF0398 family.

The chain is UPF0398 protein SPD_0338 from Streptococcus pneumoniae serotype 2 (strain D39 / NCTC 7466).